The primary structure comprises 121 residues: Large ribosomal subunit protein bL12 (121 aa).

The protein belongs to the bacterial ribosomal protein bL12 family. In terms of assembly, homodimer. Part of the ribosomal stalk of the 50S ribosomal subunit. Forms a multimeric L10(L12)X complex, where L10 forms an elongated spine to which 2 to 4 L12 dimers bind in a sequential fashion. Binds GTP-bound translation factors.

Its function is as follows. Forms part of the ribosomal stalk which helps the ribosome interact with GTP-bound translation factors. Is thus essential for accurate translation. This is Large ribosomal subunit protein bL12 from Shewanella halifaxensis (strain HAW-EB4).